The sequence spans 370 residues: MAVKRDYYEVLGVQRNASQDEIKKAFRRLARQYHPDVNKAPDAEAKFKEINEAYEVLSDPEKRSMYDRFGHAGPTAAPGFDPFSSADPFSSIFETFFGGTMRGSQRGPQRGADLRYTLSISFEEAVFGVEKTIEFRRLETCPACRGSGAEPGTEPVRCPKCGGLGEIRQRAPLFNMVTVTTCDMCRGEGTVIAIPCRECRGEGRVRQTRKITVRVPPGVDNSSQIRISGEGDAGPRGGPYGNLYVVIDVQPHPYFIREGNDIILELPLNVAQAALGVEVEVPTIDGTEHLRIPPGVQSGAVFRIRGKGVPFLRSSGRGDQIVVVRVVIPTNLTDHQRRLFEELARSLEKEPIGGQRDEGFFGRIKNALGL.

Residues 6–70 (DYYEVLGVQR…EKRSMYDRFG (65 aa)) enclose the J domain. A CR-type zinc finger spans residues 128–208 (GVEKTIEFRR…CRGEGRVRQT (81 aa)). C141, C144, C158, C161, C182, C185, C196, and C199 together coordinate Zn(2+). 4 CXXCXGXG motif repeats span residues 141-148 (CPACRGSG), 158-165 (CPKCGGLG), 182-189 (CDMCRGEG), and 196-203 (CRECRGEG).

Belongs to the DnaJ family. As to quaternary structure, homodimer. Requires Zn(2+) as cofactor.

It is found in the cytoplasm. Functionally, participates actively in the response to hyperosmotic and heat shock by preventing the aggregation of stress-denatured proteins and by disaggregating proteins, also in an autonomous, DnaK-independent fashion. Unfolded proteins bind initially to DnaJ; upon interaction with the DnaJ-bound protein, DnaK hydrolyzes its bound ATP, resulting in the formation of a stable complex. GrpE releases ADP from DnaK; ATP binding to DnaK triggers the release of the substrate protein, thus completing the reaction cycle. Several rounds of ATP-dependent interactions between DnaJ, DnaK and GrpE are required for fully efficient folding. Also involved, together with DnaK and GrpE, in the DNA replication of plasmids through activation of initiation proteins. In Roseiflexus sp. (strain RS-1), this protein is Chaperone protein DnaJ.